The chain runs to 122 residues: Holo-[acyl-carrier-protein] synthase (122 aa).

Residues Asp-8 and Glu-56 each coordinate Mg(2+).

The protein belongs to the P-Pant transferase superfamily. AcpS family. It depends on Mg(2+) as a cofactor.

It localises to the cytoplasm. It catalyses the reaction apo-[ACP] + CoA = holo-[ACP] + adenosine 3',5'-bisphosphate + H(+). Its function is as follows. Transfers the 4'-phosphopantetheine moiety from coenzyme A to a Ser of acyl-carrier-protein. In Alkaliphilus metalliredigens (strain QYMF), this protein is Holo-[acyl-carrier-protein] synthase.